Consider the following 387-residue polypeptide: Small ribosomal subunit protein mS31 (387 aa).

A mitochondrion-targeting transit peptide spans 1-56 (MLHRIPAFIRPRPFSGLPLSCGNREVSVAASVLPAAGSGAVRTENTIQRHFCTSRS). Disordered regions lie at residues 59-83 (SKKD…GEGK) and 203-228 (KSPS…SSLS). Composition is skewed to polar residues over residues 66-76 (VPANETSQKAA) and 207-217 (MRVSSRPQHQI).

Belongs to the mitochondrion-specific ribosomal protein mS31 family. As to quaternary structure, component of the mitochondrial ribosome small subunit (28S) which comprises a 12S rRNA and about 30 distinct proteins.

It is found in the mitochondrion. In Rattus norvegicus (Rat), this protein is Small ribosomal subunit protein mS31 (Mrps31).